A 308-amino-acid chain; its full sequence is GATA transcription factor 9 (308 aa).

Residues 34-57 (DDGLNTLPDSSTLSTGTLTDSSNS) are disordered. Residues 39–57 (TLPDSSTLSTGTLTDSSNS) are compositionally biased toward low complexity. Residues 142–149 (KARSKRSR) carry the Nuclear localization signal motif. The GATA-type zinc-finger motif lies at 193-247 (SGGGRRCLHCATEKTPQWRTGPMGPKTLCNACGVRYKSGRLVPEYRPASSPTFVM).

It belongs to the type IV zinc-finger family. Class A subfamily.

The protein resides in the nucleus. Functionally, transcriptional activator that specifically binds 5'-GATA-3' or 5'-GAT-3' motifs within gene promoters. May be involved in the regulation of some light-responsive genes. The chain is GATA transcription factor 9 (GATA9) from Arabidopsis thaliana (Mouse-ear cress).